Here is a 444-residue protein sequence, read N- to C-terminus: Xylose isomerase (444 aa).

Catalysis depends on residues His-101 and Asp-104. Positions 232, 268, 271, 296, 307, 309, and 339 each coordinate Mg(2+).

This sequence belongs to the xylose isomerase family. In terms of assembly, homotetramer. The cofactor is Mg(2+).

It localises to the cytoplasm. It catalyses the reaction alpha-D-xylose = alpha-D-xylulofuranose. The sequence is that of Xylose isomerase from Thermotoga sp. (strain RQ2).